The sequence spans 103 residues: N(4)-acetylcytidine amidohydrolase (103 aa).

One can recognise an ASCH domain in the interval 6-94 (ITFFQRFQND…IAEIYPNQTQ (89 aa)). The Proton acceptor role is filled by Lys21. Thr24 serves as the catalytic Nucleophile. Glu74 serves as the catalytic Proton donor.

It belongs to the N(4)-acetylcytidine amidohydrolase family.

It carries out the reaction N(4)-acetylcytidine + H2O = cytidine + acetate + H(+). The catalysed reaction is N(4)-acetyl-2'-deoxycytidine + H2O = 2'-deoxycytidine + acetate + H(+). The enzyme catalyses N(4)-acetylcytosine + H2O = cytosine + acetate + H(+). Its function is as follows. Catalyzes the hydrolysis of N(4)-acetylcytidine (ac4C). This chain is N(4)-acetylcytidine amidohydrolase (yqfB), found in Salmonella heidelberg (strain SL476).